A 381-amino-acid chain; its full sequence is Queuine tRNA-ribosyltransferase (381 aa).

D92 (proton acceptor) is an active-site residue. Substrate-binding positions include 92–96, D146, Q190, and G217; that span reads DSGGF. The segment at 248-254 is RNA binding; that stretch reads GVGRPED. The active-site Nucleophile is D267. Residues 272–276 form an RNA binding; important for wobble base 34 recognition region; sequence TRNAR. Zn(2+) contacts are provided by C305, C307, C310, and H337.

The protein belongs to the queuine tRNA-ribosyltransferase family. Homodimer. Within each dimer, one monomer is responsible for RNA recognition and catalysis, while the other monomer binds to the replacement base PreQ1. Zn(2+) is required as a cofactor.

The enzyme catalyses 7-aminomethyl-7-carbaguanine + guanosine(34) in tRNA = 7-aminomethyl-7-carbaguanosine(34) in tRNA + guanine. It participates in tRNA modification; tRNA-queuosine biosynthesis. Functionally, catalyzes the base-exchange of a guanine (G) residue with the queuine precursor 7-aminomethyl-7-deazaguanine (PreQ1) at position 34 (anticodon wobble position) in tRNAs with GU(N) anticodons (tRNA-Asp, -Asn, -His and -Tyr). Catalysis occurs through a double-displacement mechanism. The nucleophile active site attacks the C1' of nucleotide 34 to detach the guanine base from the RNA, forming a covalent enzyme-RNA intermediate. The proton acceptor active site deprotonates the incoming PreQ1, allowing a nucleophilic attack on the C1' of the ribose to form the product. After dissociation, two additional enzymatic reactions on the tRNA convert PreQ1 to queuine (Q), resulting in the hypermodified nucleoside queuosine (7-(((4,5-cis-dihydroxy-2-cyclopenten-1-yl)amino)methyl)-7-deazaguanosine). The sequence is that of Queuine tRNA-ribosyltransferase from Xanthomonas oryzae pv. oryzae (strain MAFF 311018).